The chain runs to 240 residues: 4-hydroxy-tetrahydrodipicolinate reductase (240 aa).

NAD(+) contacts are provided by residues 79-81 (ATT) and 103-106 (SANM). The active-site Proton donor/acceptor is the His-135. Position 136 (His-136) interacts with (S)-2,3,4,5-tetrahydrodipicolinate. The Proton donor role is filled by Lys-139. 145-146 (GT) serves as a coordination point for (S)-2,3,4,5-tetrahydrodipicolinate.

It belongs to the DapB family.

The protein localises to the cytoplasm. It catalyses the reaction (S)-2,3,4,5-tetrahydrodipicolinate + NAD(+) + H2O = (2S,4S)-4-hydroxy-2,3,4,5-tetrahydrodipicolinate + NADH + H(+). The enzyme catalyses (S)-2,3,4,5-tetrahydrodipicolinate + NADP(+) + H2O = (2S,4S)-4-hydroxy-2,3,4,5-tetrahydrodipicolinate + NADPH + H(+). It functions in the pathway amino-acid biosynthesis; L-lysine biosynthesis via DAP pathway; (S)-tetrahydrodipicolinate from L-aspartate: step 4/4. In terms of biological role, catalyzes the conversion of 4-hydroxy-tetrahydrodipicolinate (HTPA) to tetrahydrodipicolinate. This chain is 4-hydroxy-tetrahydrodipicolinate reductase, found in Staphylococcus saprophyticus subsp. saprophyticus (strain ATCC 15305 / DSM 20229 / NCIMB 8711 / NCTC 7292 / S-41).